The chain runs to 556 residues: Peptidylarginine deiminase (556 aa).

An N-terminal signal peptide occupies residues 1–23 (MKKLLQAKALILALGLFQLPAIA). The propeptide occupies 24–43 (QTQMQADRTNGQFATEEMQR). The active-site Amidino-cysteine intermediate is the Cys351.

This sequence belongs to the agmatine deiminase family. Requires FAD as cofactor. It depends on FMN as a cofactor.

The protein resides in the secreted. Its activity is regulated as follows. Inhibited by cysteine and TLCK. Inhibited by high concentration of thiourea and thio-L-citrulline. Deiminates the guanidino group of C-terminal arginine residues on a variety of peptides, including the vasoregulatory peptide-hormone bradykinin, to yield ammonia and a citrulline residue. May promote the growth of the pathogen in the periodontal pocket by producing ammonia, ammonia having a protective effect during acidic cleaning cycles in the mouth. The polypeptide is Peptidylarginine deiminase (Porphyromonas gingivalis (strain ATCC BAA-308 / W83)).